A 476-amino-acid polypeptide reads, in one-letter code: Thymidine phosphorylase (476 aa).

Over residues 1–11 the composition is skewed to pro residues; that stretch reads MAAPGTPPPLA. A disordered region spans residues 1–26; that stretch reads MAAPGTPPPLAPETAGADSGGGSGEH. Phosphothreonine occurs at positions 6 and 475.

This sequence belongs to the thymidine/pyrimidine-nucleoside phosphorylase family. Homodimer.

The catalysed reaction is thymidine + phosphate = 2-deoxy-alpha-D-ribose 1-phosphate + thymine. It participates in pyrimidine metabolism; dTMP biosynthesis via salvage pathway; dTMP from thymine: step 1/2. Its function is as follows. Catalyzes the reversible phosphorolysis of thymidine. The produced molecules are then utilized as carbon and energy sources or in the rescue of pyrimidine bases for nucleotide synthesis. This chain is Thymidine phosphorylase (Tymp), found in Rattus norvegicus (Rat).